The following is a 125-amino-acid chain: Large ribosomal subunit protein bL12 (125 aa).

The segment at 96 to 125 (PAPVKEGATKDEAEEIKKKIEEAGGTAELK) is disordered. Positions 102–117 (GATKDEAEEIKKKIEE) are enriched in basic and acidic residues.

Belongs to the bacterial ribosomal protein bL12 family. Homodimer. Part of the ribosomal stalk of the 50S ribosomal subunit. Forms a multimeric L10(L12)X complex, where L10 forms an elongated spine to which 2 to 4 L12 dimers bind in a sequential fashion. Binds GTP-bound translation factors.

Functionally, forms part of the ribosomal stalk which helps the ribosome interact with GTP-bound translation factors. Is thus essential for accurate translation. This chain is Large ribosomal subunit protein bL12, found in Alcanivorax borkumensis (strain ATCC 700651 / DSM 11573 / NCIMB 13689 / SK2).